A 304-amino-acid polypeptide reads, in one-letter code: Large ribosomal subunit protein uL2m (304 aa).

The N-terminal 60 residues, 1–60 (MALCALASALRSLSLASPAITARVPTLLPVGQSNVLLQLPSALALPAHRPVHMSADRSAK), are a transit peptide targeting the mitochondrion.

The protein belongs to the universal ribosomal protein uL2 family. In terms of assembly, component of the mitochondrial ribosome large subunit (39S) which comprises a 16S rRNA and about 50 distinct proteins.

The protein localises to the mitochondrion. This is Large ribosomal subunit protein uL2m (Mrpl2) from Rattus norvegicus (Rat).